Consider the following 392-residue polypeptide: LL-diaminopimelate aminotransferase (392 aa).

The substrate site is built by Y13 and G38. Pyridoxal 5'-phosphate-binding positions include Y67, 102–103, Y127, N177, Y208, and 236–238; these read SK and SCS. Substrate contacts are provided by K103, Y127, and N177. N6-(pyridoxal phosphate)lysine is present on K239. Residue R247 participates in pyridoxal 5'-phosphate binding. R366 serves as a coordination point for substrate.

This sequence belongs to the class-I pyridoxal-phosphate-dependent aminotransferase family. LL-diaminopimelate aminotransferase subfamily. Homodimer. Pyridoxal 5'-phosphate serves as cofactor.

It catalyses the reaction (2S,6S)-2,6-diaminopimelate + 2-oxoglutarate = (S)-2,3,4,5-tetrahydrodipicolinate + L-glutamate + H2O + H(+). It functions in the pathway amino-acid biosynthesis; L-lysine biosynthesis via DAP pathway; LL-2,6-diaminopimelate from (S)-tetrahydrodipicolinate (aminotransferase route): step 1/1. Involved in the synthesis of meso-diaminopimelate (m-DAP or DL-DAP), required for both lysine and peptidoglycan biosynthesis. Catalyzes the direct conversion of tetrahydrodipicolinate to LL-diaminopimelate. Can also use m-DAP instead of LL-DAP as the amino-group donor. The chain is LL-diaminopimelate aminotransferase from Gloeobacter violaceus (strain ATCC 29082 / PCC 7421).